Consider the following 332-residue polypeptide: DNA-directed RNA polymerase subunit alpha (332 aa).

The segment at 1–232 (MKGYLKDFLK…DQLSVFVDLE (232 aa)) is alpha N-terminal domain (alpha-NTD). Residues 247–332 (IDPVLLRPID…SLGDRARIAG (86 aa)) are alpha C-terminal domain (alpha-CTD).

The protein belongs to the RNA polymerase alpha chain family. Homodimer. The RNAP catalytic core consists of 2 alpha, 1 beta, 1 beta' and 1 omega subunit. When a sigma factor is associated with the core the holoenzyme is formed, which can initiate transcription.

The enzyme catalyses RNA(n) + a ribonucleoside 5'-triphosphate = RNA(n+1) + diphosphate. Its function is as follows. DNA-dependent RNA polymerase catalyzes the transcription of DNA into RNA using the four ribonucleoside triphosphates as substrates. This is DNA-directed RNA polymerase subunit alpha from Halorhodospira halophila (strain DSM 244 / SL1) (Ectothiorhodospira halophila (strain DSM 244 / SL1)).